The chain runs to 190 residues: Ion-translocating oxidoreductase complex subunit B (190 aa).

Residues 1–26 form a hydrophobic region; it reads MLTFWLAVATLSALALVAGAVLGFAA. In terms of domain architecture, 4Fe-4S spans 32–90; that stretch reads KTDPVAERIDALLPQSQCAQCGYPGCRPYAEAVAGGAPINKCVPGGEAVMLKIAAQLSV. 12 residues coordinate [4Fe-4S] cluster: Cys49, Cys52, Cys57, Cys73, Cys115, Cys118, Cys121, Cys125, Cys145, Cys148, Cys151, and Cys155. 4Fe-4S ferredoxin-type domains lie at 106–135 and 136–165; these read RVAWIDEGNCIGCTKCIQACPVDAIVGATR and AVHTVVSDLCTGCDLCVAPCPTNCIEMRPL.

It belongs to the 4Fe4S bacterial-type ferredoxin family. RnfB subfamily. In terms of assembly, the complex is composed of six subunits: RnfA, RnfB, RnfC, RnfD, RnfE and RnfG. It depends on [4Fe-4S] cluster as a cofactor.

The protein resides in the cell inner membrane. Functionally, part of a membrane-bound complex that couples electron transfer with translocation of ions across the membrane. The sequence is that of Ion-translocating oxidoreductase complex subunit B from Sodalis glossinidius (strain morsitans).